Here is a 138-residue protein sequence, read N- to C-terminus: Putative nickel-responsive regulator (138 aa).

Ni(2+) contacts are provided by His-78, His-89, His-91, and Cys-97.

The protein belongs to the transcriptional regulatory CopG/NikR family. It depends on Ni(2+) as a cofactor.

Transcriptional regulator. This Thermococcus onnurineus (strain NA1) protein is Putative nickel-responsive regulator.